Here is a 572-residue protein sequence, read N- to C-terminus: 2-succinyl-5-enolpyruvyl-6-hydroxy-3-cyclohexene-1-carboxylate synthase (572 aa).

It belongs to the TPP enzyme family. MenD subfamily. Homodimer. Requires Mg(2+) as cofactor. The cofactor is Mn(2+). Thiamine diphosphate is required as a cofactor.

The catalysed reaction is isochorismate + 2-oxoglutarate + H(+) = 5-enolpyruvoyl-6-hydroxy-2-succinyl-cyclohex-3-ene-1-carboxylate + CO2. It participates in quinol/quinone metabolism; 1,4-dihydroxy-2-naphthoate biosynthesis; 1,4-dihydroxy-2-naphthoate from chorismate: step 2/7. It functions in the pathway quinol/quinone metabolism; menaquinone biosynthesis. Its function is as follows. Catalyzes the thiamine diphosphate-dependent decarboxylation of 2-oxoglutarate and the subsequent addition of the resulting succinic semialdehyde-thiamine pyrophosphate anion to isochorismate to yield 2-succinyl-5-enolpyruvyl-6-hydroxy-3-cyclohexene-1-carboxylate (SEPHCHC). This Vibrio campbellii (strain ATCC BAA-1116) protein is 2-succinyl-5-enolpyruvyl-6-hydroxy-3-cyclohexene-1-carboxylate synthase.